The sequence spans 535 residues: Dimethylaniline monooxygenase [N-oxide-forming] 2 (535 aa).

The residue at position 2 (alanine 2) is an N-acetylalanine. FAD-binding positions include 9–13 (GAGVS), glutamate 32, 40–41 (LW), and 61–62 (NT). Residues 60-61 (TN) and 195-198 (SAAD) each bind NADP(+). Residue lysine 492 forms a Glycyl lysine isopeptide (Lys-Gly) (interchain with G-Cter in SUMO) linkage. A helical membrane pass occupies residues 510-530 (APVSFLLKILGLLAVVLAFFF).

It belongs to the FMO family. Requires FAD as cofactor. The cofactor is Mg(2+).

The protein localises to the microsome membrane. It localises to the endoplasmic reticulum membrane. Its function is as follows. Catalyzes the oxidative metabolism of numerous xenobiotics, including mainly therapeutic drugs and insecticides that contain a soft nucleophile, most commonly nitrogen and sulfur and participates to their bioactivation. Catalyzes the S-oxygenation of the prodrug ethionamide (ETA) to the S-oxide (ETASO), the first step in its bioactivation following by the second oxygenation to the sulfinic acid but to a lesser extend. This is Dimethylaniline monooxygenase [N-oxide-forming] 2 from Mus musculus (Mouse).